The primary structure comprises 538 residues: Zinc finger protein 155 (538 aa).

In terms of domain architecture, KRAB spans 8-78 (VTFKDVAVVF…GTATQREGNS (71 aa)). C2H2-type zinc fingers lie at residues 176 to 198 (YTCD…QRVH), 204 to 226 (FMCD…QRVH), 232 to 254 (FKCE…RKLH), 260 to 282 (YICE…KRIH), 288 to 310 (FKCD…SMVH), 316 to 338 (FRCD…CMVH), 344 to 366 (YRCE…QVVH), 372 to 394 (YNCK…QRVH), 400 to 422 (FKCE…QRSH), 428 to 450 (YKCE…QRVH), and 456 to 478 (YNCK…KRLH). The C2H2-type 12; degenerate zinc-finger motif lies at 484–506 (FKCEDCGKRLVHRTYRKDQPRDY).

It belongs to the krueppel C2H2-type zinc-finger protein family.

It localises to the nucleus. Its function is as follows. May be involved in transcriptional regulation. This is Zinc finger protein 155 (ZNF155) from Homo sapiens (Human).